The sequence spans 450 residues: 3-phosphoshikimate 1-carboxyvinyltransferase (450 aa).

Residues K28, S29, and R33 each contribute to the 3-phosphoshikimate site. Phosphoenolpyruvate is bound at residue K28. Phosphoenolpyruvate is bound by residues G100 and R128. 3-phosphoshikimate contacts are provided by S173, Q175, D326, and K353. Q175 contributes to the phosphoenolpyruvate binding site. D326 functions as the Proton acceptor in the catalytic mechanism. Phosphoenolpyruvate is bound by residues R357 and R402.

Belongs to the EPSP synthase family. In terms of assembly, monomer.

The protein localises to the cytoplasm. It catalyses the reaction 3-phosphoshikimate + phosphoenolpyruvate = 5-O-(1-carboxyvinyl)-3-phosphoshikimate + phosphate. It participates in metabolic intermediate biosynthesis; chorismate biosynthesis; chorismate from D-erythrose 4-phosphate and phosphoenolpyruvate: step 6/7. Its function is as follows. Catalyzes the transfer of the enolpyruvyl moiety of phosphoenolpyruvate (PEP) to the 5-hydroxyl of shikimate-3-phosphate (S3P) to produce enolpyruvyl shikimate-3-phosphate and inorganic phosphate. This Brucella melitensis biotype 1 (strain ATCC 23456 / CCUG 17765 / NCTC 10094 / 16M) protein is 3-phosphoshikimate 1-carboxyvinyltransferase.